Consider the following 135-residue polypeptide: ATP synthase epsilon chain (135 aa).

Residues 90-103 (DVRRAESAKERAES) show a composition bias toward basic and acidic residues. Positions 90–115 (DVRRAESAKERAESHLNNNDEDTDIN) are disordered.

This sequence belongs to the ATPase epsilon chain family. F-type ATPases have 2 components, CF(1) - the catalytic core - and CF(0) - the membrane proton channel. CF(1) has five subunits: alpha(3), beta(3), gamma(1), delta(1), epsilon(1). CF(0) has three main subunits: a, b and c.

It localises to the cell membrane. Produces ATP from ADP in the presence of a proton gradient across the membrane. The chain is ATP synthase epsilon chain from Staphylococcus carnosus (strain TM300).